Reading from the N-terminus, the 341-residue chain is Diguanylate cyclase DgcP (341 aa).

The region spanning 18 to 154 (SLESLVRQLL…LFAGLIAQYI (137 aa)) is the GAF domain. The 134-residue stretch at 204–337 (HKIMIAFIDL…KQKTPFVAHP (134 aa)) folds into the GGDEF domain. Residue Asp212 participates in Mg(2+) binding. Substrate contacts are provided by Asn220, His225, and Asp229. Asp255 serves as a coordination point for Mg(2+). Asp255 acts as the Proton acceptor in catalysis.

Homodimer. Mg(2+) is required as a cofactor.

It catalyses the reaction 2 GTP = 3',3'-c-di-GMP + 2 diphosphate. The protein operates within purine metabolism; 3',5'-cyclic di-GMP biosynthesis. Catalyzes the synthesis of cyclic-di-GMP (c-di-GMP) via the condensation of 2 GTP molecules. Cyclic-di-GMP is a second messenger which controls cell surface-associated traits in bacteria. In Escherichia coli (strain K12), this protein is Diguanylate cyclase DgcP.